The following is a 67-amino-acid chain: uncharacterized protein (67 aa).

This sequence belongs to the flocculin family.

This is an uncharacterized protein from Saccharomyces cerevisiae (strain ATCC 204508 / S288c) (Baker's yeast).